The following is a 329-amino-acid chain: Centromere protein L (329 aa).

2 positions are modified to phosphoserine: Ser40 and Ser54.

This sequence belongs to the CENP-L/IML3 family. As to quaternary structure, component of the CENPA-CAD complex, composed of CENPI, CENPK, CENPL, CENPO, CENPP, CENPQ, CENPR and CENPS. The CENPA-CAD complex interacts with the CENPA-NAC complex, at least composed of CENPA, CENPC, CENPH, CENPM, CENPN, CENPT and CENPU.

Its subcellular location is the nucleus. It localises to the chromosome. The protein localises to the centromere. Functionally, component of the CENPA-CAD (nucleosome distal) complex, a complex recruited to centromeres which is involved in assembly of kinetochore proteins, mitotic progression and chromosome segregation. May be involved in incorporation of newly synthesized CENPA into centromeres via its interaction with the CENPA-NAC complex. The polypeptide is Centromere protein L (Cenpl) (Mus musculus (Mouse)).